The following is a 121-amino-acid chain: Nitrogenase-stabilizing/protective protein NifW (121 aa).

The protein belongs to the NifW family. As to quaternary structure, homotrimer; associates with NifD.

Functionally, may protect the nitrogenase Fe-Mo protein from oxidative damage. The protein is Nitrogenase-stabilizing/protective protein NifW of Methylacidiphilum infernorum (isolate V4) (Methylokorus infernorum (strain V4)).